A 377-amino-acid polypeptide reads, in one-letter code: N-acetyldiaminopimelate deacetylase (377 aa).

Aspartate 69 is a catalytic residue. The Proton acceptor role is filled by glutamate 128.

It belongs to the peptidase M20A family. N-acetyldiaminopimelate deacetylase subfamily.

The enzyme catalyses N-acetyl-(2S,6S)-2,6-diaminopimelate + H2O = (2S,6S)-2,6-diaminopimelate + acetate. It participates in amino-acid biosynthesis; L-lysine biosynthesis via DAP pathway; LL-2,6-diaminopimelate from (S)-tetrahydrodipicolinate (acetylase route): step 3/3. Its function is as follows. Catalyzes the conversion of N-acetyl-diaminopimelate to diaminopimelate and acetate. The protein is N-acetyldiaminopimelate deacetylase of Streptococcus gordonii (strain Challis / ATCC 35105 / BCRC 15272 / CH1 / DL1 / V288).